The chain runs to 329 residues: Solute carrier family 35 member B1 (329 aa).

8 helical membrane passes run 21-41, 60-80, 91-111, 142-162, 175-195, 220-240, 250-270, and 292-312; these read AVCFCGVFVCYFYYGILQETI, TLVFIQCIINAAFARLLIQFF, WLYGLCSLSYLGAMVSSNSAL, YPMAKYLCVFLIVGGVALFLY, VFGFGEMLLLLSLTLDGLTGV, TLVLGIAVLWSGEVWEFLAFT, ILLFGITSALGQTFIFMTVVY, and VLLFGNVISHMQWFGTILVFL. Residues 325–329 carry the Di-lysine motif motif; it reads KKTTH.

It belongs to the nucleotide-sugar transporter family. SLC35B subfamily.

Its subcellular location is the endoplasmic reticulum membrane. In terms of biological role, probable sugar transporter. The polypeptide is Solute carrier family 35 member B1 (slc35b1) (Danio rerio (Zebrafish)).